A 591-amino-acid chain; its full sequence is Inactive metallocarboxypeptidase ECM14 (591 aa).

A signal peptide spans 1–21 (MRLFARLEVLAILACAVPIAA). Residues 22 to 175 (IPSFLSNSYP…QTIYESYPSS (154 aa)) constitute a propeptide that is removed on maturation. The Peptidase M14 domain occupies 203–523 (DYQPFSVIVT…NAVMVLGRFL (321 aa)). Zn(2+) contacts are provided by His265 and Glu268. Residues 265–268 (HARE), Arg323, and 340–341 (DR) each bind substrate. An intrachain disulfide couples Cys334 to Cys357. N-linked (GlcNAc...) asparagine glycans are attached at residues Asn350 and Asn381. Residue His397 coordinates Zn(2+). 398-399 (SY) provides a ligand contact to substrate. Over residues 533 to 543 (DWEDESQRPKA) the composition is skewed to basic and acidic residues. A disordered region spans residues 533–591 (DWEDESQRPKADEDDIPSENELGENDDSWIPFDYRNHDDQNEGEGYDNDEWGFRRRRKG). Composition is skewed to acidic residues over residues 544 to 559 (DEDD…ENDD) and 573 to 582 (NEGEGYDNDE).

The protein belongs to the peptidase M14 family. The cofactor is Zn(2+).

It localises to the vacuole. Its subcellular location is the secreted. Inactive carboxypeptidase that may play a role in cell wall organization and biogenesis. The protein is Inactive metallocarboxypeptidase ECM14 (ECM14) of Paracoccidioides lutzii (strain ATCC MYA-826 / Pb01) (Paracoccidioides brasiliensis).